A 378-amino-acid chain; its full sequence is Chaperone protein DnaJ 2 (378 aa).

A J domain is found at 4 to 68 (DYYAVLGVRR…QKKQVYDLGG (65 aa)). A CR-type zinc finger spans residues 130 to 212 (GTTKDIQVDT…CAGDGRVRSR (83 aa)). Residues Cys143, Cys146, Cys160, Cys163, Cys186, Cys189, Cys200, and Cys203 each coordinate Zn(2+). 4 CXXCXGXG motif repeats span residues 143–150 (CNTCNGEG), 160–167 (CDMCRGRG), 186–193 (CPQCQGFG), and 200–207 (CPECAGDG). Disordered stretches follow at residues 297 to 319 (RPGT…LRGG) and 351 to 378 (RGEE…FNGR). Positions 358-367 (GQFQPGQQGL) are enriched in polar residues.

This sequence belongs to the DnaJ family. Homodimer. Requires Zn(2+) as cofactor.

It is found in the cytoplasm. Functionally, participates actively in the response to hyperosmotic and heat shock by preventing the aggregation of stress-denatured proteins and by disaggregating proteins, also in an autonomous, DnaK-independent fashion. Unfolded proteins bind initially to DnaJ; upon interaction with the DnaJ-bound protein, DnaK hydrolyzes its bound ATP, resulting in the formation of a stable complex. GrpE releases ADP from DnaK; ATP binding to DnaK triggers the release of the substrate protein, thus completing the reaction cycle. Several rounds of ATP-dependent interactions between DnaJ, DnaK and GrpE are required for fully efficient folding. Also involved, together with DnaK and GrpE, in the DNA replication of plasmids through activation of initiation proteins. This is Chaperone protein DnaJ 2 from Streptomyces coelicolor (strain ATCC BAA-471 / A3(2) / M145).